The following is a 617-amino-acid chain: Formin-binding protein 1 (617 aa).

The tract at residues 1 to 79 (MSWGTELWDQ…CKAFISNLNE (79 aa)) is required for self-association and induction of membrane tubulation. The F-BAR domain occupies 1–264 (MSWGTELWDQ…AAESIDQKND (264 aa)). The tract at residues 1–335 (MSWGTELWDQ…KKNKLMSLLT (335 aa)) is interaction with microtubules. 2 positions are modified to N6-acetyllysine: lysine 66 and lysine 110. A coiled-coil region spans residues 67 to 259 (YTSCKAFISN…DGIVKAAESI (193 aa)). The required for self-association and induction of membrane tubulation stretch occupies residues 251–617 (GIVKAAESID…VCLDKNAKDS (367 aa)). Disordered regions lie at residues 280–315 (GDIE…KFGG) and 333–366 (LLTS…QKEP). Phosphoserine occurs at positions 296 and 299. Over residues 338 to 347 (HQPPPPPPAS) the composition is skewed to pro residues. Residues serine 349 and serine 359 each carry the phosphoserine modification. Positions 398–490 (TPEDFSNLPP…EVEGRLPARS (93 aa)) form a coiled coil. The interval 400–552 (EDFSNLPPEQ…FDDEEPLPAI (153 aa)) is interaction with RND2. One can recognise an REM-1 domain in the interval 404–481 (NLPPEQRRKK…TQKFEAWLAE (78 aa)). The interval 486-531 (LPARSEQARRQSGLYDSQNPPTVNNCAQDRESPDGSYTEEQSQESE) is disordered. The interaction with PDE6G stretch occupies residues 495 to 617 (RQSGLYDSQN…VCLDKNAKDS (123 aa)). Phosphoserine is present on serine 497. The segment covering 499–512 (LYDSQNPPTVNNCA) has biased composition (polar residues). At tyrosine 500 the chain carries Phosphotyrosine. Residues 514–617 (DRESPDGSYT…VCLDKNAKDS (104 aa)) are required for interaction with TNKS. Position 521 is a phosphoserine (serine 521). An interaction with DNM1 and DNM3 region spans residues 535-617 (LATDFDDEFD…VCLDKNAKDS (83 aa)). An SH3 domain is found at 550–611 (PAIGTCKALY…PTSYVEVCLD (62 aa)). The interaction with ARHGAP17, DAAM1, DIAPH1 and DIAPH2 stretch occupies residues 550–617 (PAIGTCKALY…VCLDKNAKDS (68 aa)). The tract at residues 553–609 (GTCKALYTFEGQNEGTISVVEGETLYVIEEDKGDGWTRIRRNEDEEGYVPTSYVEVC) is interaction with DNM2 and WASL. Positions 553-610 (GTCKALYTFEGQNEGTISVVEGETLYVIEEDKGDGWTRIRRNEDEEGYVPTSYVEVCL) are interaction with FASLG.

The protein belongs to the FNBP1 family. Interacts specifically with GTP-bound RND2 and CDC42. Interacts with PDE6G and microtubules. Homodimerizes, the dimers can polymerize end-to-end to form filamentous structures. Interacts with AKAP9, ARHGAP17, DAAM1, DIAPH1, DIAPH2, DNM1, DNM2, DNM3, FASLG/FASL, SNX2 and WASL/N-WASP. May interact with TNKS. As to expression, very highly expressed in the epithelial cells of the gastrointestinal tract, respiratory, reproductive and urinary systems. Also highly expressed in brown adipose tissue, cardiomyocytes, enteric ganglia and glucagon producing cells of the pancreas. Expressed in germ cells of the testis and all regions of the brain.

It localises to the cytoplasm. The protein resides in the cytoskeleton. It is found in the cell cortex. Its subcellular location is the lysosome. The protein localises to the cytoplasmic vesicle. It localises to the cell membrane. The protein resides in the membrane. It is found in the clathrin-coated pit. In terms of biological role, may act as a link between RND2 signaling and regulation of the actin cytoskeleton. Required to coordinate membrane tubulation with reorganization of the actin cytoskeleton during the late stage of clathrin-mediated endocytosis. Binds to lipids such as phosphatidylinositol 4,5-bisphosphate and phosphatidylserine and promotes membrane invagination and the formation of tubules. Also enhances actin polymerization via the recruitment of WASL/N-WASP, which in turn activates the Arp2/3 complex. Actin polymerization may promote the fission of membrane tubules to form endocytic vesicles. May be required for the lysosomal retention of FASLG/FASL. In Homo sapiens (Human), this protein is Formin-binding protein 1 (FNBP1).